The sequence spans 346 residues: UPF0421 protein OB2406 (346 aa).

A run of 4 helical transmembrane segments spans residues 16-36 (IAVLLTAYICEWIGWSPVFAV), 55-75 (LIRFPASAIGAAYAVLFIALF), 102-122 (LLVATITSVAMVDVIHSNYVM), and 128-148 (LFTTTIGLSVSTLVNMFLLPP).

The protein belongs to the UPF0421 family.

It localises to the cell membrane. The polypeptide is UPF0421 protein OB2406 (Oceanobacillus iheyensis (strain DSM 14371 / CIP 107618 / JCM 11309 / KCTC 3954 / HTE831)).